A 367-amino-acid polypeptide reads, in one-letter code: Outer membrane porin C (367 aa).

The signal sequence occupies residues 1–21; sequence MKVKVLSLLVPALLVAGAANA.

It belongs to the Gram-negative porin family. As to quaternary structure, homotrimer.

It localises to the cell outer membrane. In terms of biological role, forms pores that allow passive diffusion of small molecules across the outer membrane. This is Outer membrane porin C (ompC) from Escherichia coli O157:H7.